The following is a 503-amino-acid chain: Probable cytosol aminopeptidase (503 aa).

Residues Lys-274 and Asp-279 each contribute to the Mn(2+) site. Lys-286 is a catalytic residue. Asp-297, Asp-356, and Glu-358 together coordinate Mn(2+). Residue Arg-360 is part of the active site.

Belongs to the peptidase M17 family. Mn(2+) is required as a cofactor.

The protein resides in the cytoplasm. It catalyses the reaction Release of an N-terminal amino acid, Xaa-|-Yaa-, in which Xaa is preferably Leu, but may be other amino acids including Pro although not Arg or Lys, and Yaa may be Pro. Amino acid amides and methyl esters are also readily hydrolyzed, but rates on arylamides are exceedingly low.. The enzyme catalyses Release of an N-terminal amino acid, preferentially leucine, but not glutamic or aspartic acids.. Functionally, presumably involved in the processing and regular turnover of intracellular proteins. Catalyzes the removal of unsubstituted N-terminal amino acids from various peptides. The polypeptide is Probable cytosol aminopeptidase (Burkholderia cenocepacia (strain ATCC BAA-245 / DSM 16553 / LMG 16656 / NCTC 13227 / J2315 / CF5610) (Burkholderia cepacia (strain J2315))).